The sequence spans 190 residues: dTTP/UTP pyrophosphatase (190 aa).

D69 functions as the Proton acceptor in the catalytic mechanism.

It belongs to the Maf family. YhdE subfamily. Requires a divalent metal cation as cofactor.

It is found in the cytoplasm. The catalysed reaction is dTTP + H2O = dTMP + diphosphate + H(+). It catalyses the reaction UTP + H2O = UMP + diphosphate + H(+). Functionally, nucleoside triphosphate pyrophosphatase that hydrolyzes dTTP and UTP. May have a dual role in cell division arrest and in preventing the incorporation of modified nucleotides into cellular nucleic acids. The polypeptide is dTTP/UTP pyrophosphatase (Sphingopyxis alaskensis (strain DSM 13593 / LMG 18877 / RB2256) (Sphingomonas alaskensis)).